The sequence spans 760 residues: Transmembrane channel-like protein 1 (760 aa).

Residues 1-80 (MSPKKVQIKV…RRRRLKRGAE (80 aa)) form a disordered region. Residues 1–182 (MSPKKVQIKV…KIKAIESQFG (182 aa)) lie on the Cytoplasmic side of the membrane. Over residues 13 to 29 (KEDETEESSSEEEEEVE) the composition is skewed to acidic residues. Residues 30–39 (DKLPRRESLR) are compositionally biased toward basic and acidic residues. At serine 37 the chain carries Phosphoserine. Residue threonine 45 is modified to Phosphothreonine. Acidic residues predominate over residues 50–61 (NEDDPEPEPEDE). Phosphoserine is present on serine 128. The helical transmembrane segment at 183 to 220 (SSVASYFLFLRWMYGVNMVLFILTFSLIMLPEYLWGLP) threads the bilayer. Residues 221 to 271 (YGSLPRKTVPRAEEASAANFGVLYDFNGLAQYSVLFYGYYDNKRTIGWMNF) lie on the Extracellular side of the membrane. A helical membrane pass occupies residues 272-303 (RLPLSYFLVGIMCIGYSFLVVLKAMTKNIGDD). The Cytoplasmic portion of the chain corresponds to 304-359 (GGGDDNTFNFSWKVFTSWDYLIGNPETADNKFNSITMNFKEAITEEKAAQVEENVH). Serine 314 is subject to Phosphoserine. Residues 360–390 (LIRFLRFLANFFVFLTLGGSGYLIFWAVKRS) traverse the membrane as a helical segment. At 391-402 (QEFAQQDPDTLG) the chain is on the extracellular side. A Phosphothreonine modification is found at threonine 400. The helical transmembrane segment at 403–430 (WWEKNEMNMVMSLLGMFCPTLFDLFAEL) threads the bilayer. Residues 431–434 (EDYH) lie on the Cytoplasmic side of the membrane. The chain crosses the membrane as a helical span at residues 435–469 (PLIALKWLLGRIFALLLGNLYVFILALMDEINNKI). Residues 470-515 (EEEKLVKANITLWEANMIKAYNASFSENSTGPPFFVHPADVPRGPC) are Extracellular-facing. The chain crosses the membrane as a helical span at residues 516 to 553 (WETMVGQEFVRLTVSDVLTTYVTILIGDFLRACFVRFC). Over 554-572 (NYCWCWDLEYGYPSYTEFD) the chain is Cytoplasmic. A helical membrane pass occupies residues 573–593 (ISGNVLALIFNQGMIWMGSFF). Topologically, residues 594–596 (APS) are extracellular. A helical membrane pass occupies residues 597-619 (LPGINILRLHTSMYFQCWAVMCC). Over 620-633 (NVPEARVFKASRSN) the chain is Cytoplasmic. A helical transmembrane segment spans residues 634-657 (NFYLGMLLLILFLSTMPVLYMIVS). Over 658–700 (LPPSFDCGPFSGKNRMFEVIGETLEHDFPSWMAKILRQLSNPG) the chain is Extracellular. A helical transmembrane segment spans residues 701-734 (LVIAVILVMVLAIYYLNATAKGQKAANLDLKKKM). Topologically, residues 735-760 (KMQALENKMRNKKMAAARAAAAAGRQ) are cytoplasmic.

It belongs to the TMC family. Forms the MET channel complosed of TMC dimer (TMC1 or TMC2), TMIE, TOMT, CIB (CIB2 or CIB3), LHFPL5 and PDH15. The interaction of TMC1 and TMC2 with TOMT is required for the transportation of TMC1/2 into the stereocilia of hair cells. Interacts (via N-terminus) with both isoforms CD1 and CD3 of PCDH15. Can form a heterodimer with TMC2, TMC5 or TMC7. Detected in fetal cochlea, and at low levels in placenta and testis.

The protein resides in the cell membrane. The enzyme catalyses Ca(2+)(in) = Ca(2+)(out). Its function is as follows. Pore-forming subunit of the mechanotransducer (MET) non-selective cation channel complex located at the tips of stereocilia of cochlear hair cells and that mediates sensory transduction in the auditory system. The MET complex is composed of two dimeric pore-forming ion-conducting transmembrane TMC (TMC1 or TMC2) subunits, and aided by several auxiliary proteins including LHFPL5, TMIE, CIB2/3 and TOMT, and the tip-link PCDH15. MET channel is activated by tension in the tip-link extending from the side wall of one stereocilium to the tip of the adjacent shorter stereocilium, where the channel is located. TMC1 MET channel is highly permeable to calcium and likely transports monovalent cations. Also involved in vestibular hair cells transduction current. The polypeptide is Transmembrane channel-like protein 1 (Homo sapiens (Human)).